A 313-amino-acid chain; its full sequence is Ribosomal RNA small subunit methyltransferase H (313 aa).

S-adenosyl-L-methionine contacts are provided by residues Gly31 to His33, Asp51, Phe77, Asp95, and Gln102.

Belongs to the methyltransferase superfamily. RsmH family.

The protein resides in the cytoplasm. The catalysed reaction is cytidine(1402) in 16S rRNA + S-adenosyl-L-methionine = N(4)-methylcytidine(1402) in 16S rRNA + S-adenosyl-L-homocysteine + H(+). Its function is as follows. Specifically methylates the N4 position of cytidine in position 1402 (C1402) of 16S rRNA. The protein is Ribosomal RNA small subunit methyltransferase H of Xylella fastidiosa (strain M23).